The following is a 394-amino-acid chain: MDEPSTDKILIGAQIITTVITLFTGVFEFIIAAKSKMKRMKSEQMFSVNQDGLIHIIKSLLPGRNIIFISNAPTSTTDPSFNSQTMKNFLKVIFRLLPFFIGAVFIHLNIIPFHHLIIFTENGKWYFDSIQEELIPIVKERLKQIMSSQPDVIFACGAVVRDIFYMYLEEGSIEMFEINGNLKVDINKFKKIYTTVSDKNISPQSNEILDLFEFDTTKSSYEDVIEEYSKFENDSLGSFENPDYSGFHLLSKRKWNNKEALIVGIGKSNNKTTVQIKGDLLDKGYFRTELAIDTYFDRNKVLINKMVKNFKSTQEIIKPSPVISGNWSLDEQKALMVEVSTLGNKSEINWFFISKQLFLKGISRNARECQRKHESIQYVGLSGNPKGKFKRTFD.

The next 2 helical transmembrane spans lie at 11–31 and 99–119; these read IGAQ…EFII and FFIG…LIIF. Residues 325–377 form the Myb-like domain; that stretch reads GNWSLDEQKALMVEVSTLGNKSEINWFFISKQLFLKGISRNARECQRKHESIQ.

It localises to the membrane. The polypeptide is Myb-like protein R (mybR) (Dictyostelium discoideum (Social amoeba)).